Consider the following 403-residue polypeptide: NADH-quinone oxidoreductase subunit D (403 aa).

The protein belongs to the complex I 49 kDa subunit family. In terms of assembly, NDH-1 is composed of 14 different subunits. Subunits NuoB, C, D, E, F, and G constitute the peripheral sector of the complex.

The protein resides in the cell inner membrane. It catalyses the reaction a quinone + NADH + 5 H(+)(in) = a quinol + NAD(+) + 4 H(+)(out). In terms of biological role, NDH-1 shuttles electrons from NADH, via FMN and iron-sulfur (Fe-S) centers, to quinones in the respiratory chain. The immediate electron acceptor for the enzyme in this species is believed to be ubiquinone. Couples the redox reaction to proton translocation (for every two electrons transferred, four hydrogen ions are translocated across the cytoplasmic membrane), and thus conserves the redox energy in a proton gradient. The sequence is that of NADH-quinone oxidoreductase subunit D from Erythrobacter litoralis (strain HTCC2594).